We begin with the raw amino-acid sequence, 1180 residues long: Lon protease homolog 2, peroxisomal (1180 aa).

The Lon N-terminal domain occupies 19–366; that stretch reads LPTCKLDSNL…ELINMINQLI (348 aa). The disordered stretch occupies residues 416-465; it reads PISNRGNIKSFNNSENGNNNKTNGSGITSRRPKSNEDGGEVYDEEDDDEE. Residues 422 to 444 show a composition bias toward low complexity; it reads NIKSFNNSENGNNNKTNGSGITS. Residues 452-465 are compositionally biased toward acidic residues; it reads DGGEVYDEEDDDEE. Residue 667 to 674 participates in ATP binding; sequence GPPGTGKT. The 240-residue stretch at 924 to 1163 folds into the Lon proteolytic domain; sequence NSRVGIVNGL…YDVMKILWGE (240 aa). Catalysis depends on residues Ser-1032 and Lys-1075.

It belongs to the peptidase S16 family.

Its subcellular location is the peroxisome matrix. The catalysed reaction is Hydrolysis of proteins in presence of ATP.. In terms of biological role, ATP-dependent serine protease that mediates the selective degradation of misfolded and unassembled polypeptides in the peroxisomal matrix. Necessary for type 2 peroxisome targeting signal (PTS2)-containing protein processing and facilitates peroxisome matrix protein import. In Scheffersomyces stipitis (strain ATCC 58785 / CBS 6054 / NBRC 10063 / NRRL Y-11545) (Yeast), this protein is Lon protease homolog 2, peroxisomal.